The following is a 230-amino-acid chain: 2-phytyl-1,4-naphtoquinone methyltransferase (230 aa).

This sequence belongs to the class I-like SAM-binding methyltransferase superfamily. MenG/UbiE family.

It catalyses the reaction demethylphylloquinol + S-adenosyl-L-methionine = phylloquinol + S-adenosyl-L-homocysteine + H(+). It participates in cofactor biosynthesis; phylloquinone biosynthesis. Its function is as follows. Methyltransferase required for the conversion of 2-phytyl-1,4-beta-naphthoquinol to phylloquinol. This chain is 2-phytyl-1,4-naphtoquinone methyltransferase, found in Nostoc punctiforme (strain ATCC 29133 / PCC 73102).